Consider the following 216-residue polypeptide: Ribonuclease HII (216 aa).

Residues 27 to 216 enclose the RNase H type-2 domain; the sequence is ASLAGVDEAG…VKEHVKNCEG (190 aa). Positions 33, 34, and 125 each coordinate a divalent metal cation.

Belongs to the RNase HII family. Requires Mn(2+) as cofactor. It depends on Mg(2+) as a cofactor.

The protein localises to the cytoplasm. The enzyme catalyses Endonucleolytic cleavage to 5'-phosphomonoester.. Endonuclease that specifically degrades the RNA of RNA-DNA hybrids. This is Ribonuclease HII from Geotalea daltonii (strain DSM 22248 / JCM 15807 / FRC-32) (Geobacter daltonii).